The sequence spans 258 residues: Transcription factor RSL3 (258 aa).

Positions R98–N105 match the D-box motif. A disordered region spans residues E119 to Q178. Positions S130–S152 are enriched in polar residues. Positions T173–R186 are basic motif. The 50-residue stretch at T173–L222 folds into the bHLH domain. Positions E187–L222 are helix-loop-helix motif.

In terms of assembly, homodimer. In terms of processing, ubiquitinated. Ubiquitination leads to its subsequent degradation by the 26S proteasome. In terms of tissue distribution, expressed constitutively in roots, leaves, and flowers. Expressed in root epidermal hair cells.

The protein localises to the nucleus. Its function is as follows. Transcription factor involved in the regulation of root hair elongation. Is sufficient to promote postmitotic cell growth in root-hair cells and is a direct transcriptional target of RHD6 and RSL1. Involved in the regulation of root hair elongation in response to low phosphate. Controls root hair cell growth by regulating the expression of genes encoding proteins involved in cell signaling, cell wall modification and secretion. This is Transcription factor RSL3 from Arabidopsis thaliana (Mouse-ear cress).